Consider the following 233-residue polypeptide: Choline-phosphate cytidylyltransferase (233 aa).

CDP-choline contacts are provided by L6, A8, G9, Y80, S85, and A101. D102 contacts Mg(2+). Y187 serves as a coordination point for CDP-choline. Mg(2+) is bound by residues E213 and D215.

Belongs to the LicC/PntC cytidylyltransferase family. Mg(2+) serves as cofactor.

It catalyses the reaction phosphocholine + CTP + H(+) = CDP-choline + diphosphate. It functions in the pathway lipopolysaccharide biosynthesis. Cytidylyltransferase involved in the biosynthesis of lipopolysaccharides (LPS), a necessary component and antigenic determinant of the outer membrane that has been shown to be an important factor in the host-parasite interaction in a number of Gram-negative species. Catalyzes the activation of phosphocholine (P-Cho) to CDP-choline (CDP-Cho). LicC is critical for the expression of the 6A2-specific epitope. This chain is Choline-phosphate cytidylyltransferase, found in Haemophilus influenzae (strain ATCC 51907 / DSM 11121 / KW20 / Rd).